The following is a 328-amino-acid chain: D-alanine--D-alanine ligase (328 aa).

The ATP-grasp domain maps to 118–317 (LSVLTKFNIP…MPQMLDNEIT (200 aa)). Residue 146-201 (KKALGLPFFVKPNQSGSSLGVSKVDALDQLEKALEFAFAEDNEILIESYLNGTEVS) participates in ATP binding. Mg(2+)-binding residues include aspartate 272, glutamate 284, and asparagine 286.

It belongs to the D-alanine--D-alanine ligase family. It depends on Mg(2+) as a cofactor. Requires Mn(2+) as cofactor.

Its subcellular location is the cytoplasm. It carries out the reaction 2 D-alanine + ATP = D-alanyl-D-alanine + ADP + phosphate + H(+). It participates in cell wall biogenesis; peptidoglycan biosynthesis. In terms of biological role, cell wall formation. This chain is D-alanine--D-alanine ligase, found in Flavobacterium psychrophilum (strain ATCC 49511 / DSM 21280 / CIP 103535 / JIP02/86).